The sequence spans 230 residues: Carbohydrate deacetylase (230 aa).

Mg(2+) contacts are provided by H59 and H123.

Belongs to the YdjC deacetylase family. As to quaternary structure, homodimer. Requires Mg(2+) as cofactor.

Probably catalyzes the deacetylation of acetylated carbohydrates an important step in the degradation of oligosaccharides. The protein is Carbohydrate deacetylase of Oceanobacillus iheyensis (strain DSM 14371 / CIP 107618 / JCM 11309 / KCTC 3954 / HTE831).